The primary structure comprises 260 residues: 14-3-3 protein 3 (260 aa).

The protein belongs to the 14-3-3 family. As to quaternary structure, homodimer.

This chain is 14-3-3 protein 3 (TFT3), found in Solanum lycopersicum (Tomato).